The primary structure comprises 501 residues: Ribulose bisphosphate carboxylase large chain (501 aa).

Substrate-binding residues include Asn-141 and Thr-191. Lys-193 functions as the Proton acceptor in the catalytic mechanism. Lys-195 serves as a coordination point for substrate. The Mg(2+) site is built by Lys-219, Asp-221, and Glu-222. Lys-219 carries the post-translational modification N6-carboxylysine. Catalysis depends on His-311, which acts as the Proton acceptor. The substrate site is built by Arg-312, His-344, and Ser-396.

This sequence belongs to the RuBisCO large chain family. Type I subfamily. In terms of assembly, heterohexadecamer of 8 large chains and 8 small chains. Requires Mg(2+) as cofactor.

The enzyme catalyses 2 (2R)-3-phosphoglycerate + 2 H(+) = D-ribulose 1,5-bisphosphate + CO2 + H2O. It catalyses the reaction D-ribulose 1,5-bisphosphate + O2 = 2-phosphoglycolate + (2R)-3-phosphoglycerate + 2 H(+). RuBisCO catalyzes two reactions: the carboxylation of D-ribulose 1,5-bisphosphate, the primary event in carbon dioxide fixation, as well as the oxidative fragmentation of the pentose substrate. Both reactions occur simultaneously and in competition at the same active site. This chain is Ribulose bisphosphate carboxylase large chain, found in Paraburkholderia phymatum (strain DSM 17167 / CIP 108236 / LMG 21445 / STM815) (Burkholderia phymatum).